Here is a 318-residue protein sequence, read N- to C-terminus: Probable cell division protein WhiA (318 aa).

Residues 276 to 310 constitute a DNA-binding region (H-T-H motif); it reads TLQELGEMVESGSISKSGINHRLRKIDQIADKIRN.

It belongs to the WhiA family.

In terms of biological role, involved in cell division and chromosome segregation. In Exiguobacterium sibiricum (strain DSM 17290 / CCUG 55495 / CIP 109462 / JCM 13490 / 255-15), this protein is Probable cell division protein WhiA.